Consider the following 207-residue polypeptide: Putative tributyltin chloride resistance protein (207 aa).

The segment at 37–122 (NLPIELALMP…YHAIAALNLG (86 aa)) is slt-type domain. The active site involves glutamate 49.

This sequence belongs to the transglycosylase Slt family.

The chain is Putative tributyltin chloride resistance protein (tbtA) from Alteromonas sp. (strain M-1).